The sequence spans 88 residues: Molybdopterin synthase sulfur carrier subunit (88 aa).

The residue at position 88 (G88) is a 1-thioglycine; alternate. G88 carries the glycyl adenylate; alternate modification.

This sequence belongs to the MoaD family. MOCS2A subfamily. Heterotetramer; composed of 2 small (MOCS2A) and 2 large (MOCS2B) subunits. In terms of processing, C-terminal thiocarboxylation occurs in 2 steps, it is first acyl-adenylated (-COAMP) via the hesA/moeB/thiF part of MOCS3, then thiocarboxylated (-COSH) via the rhodanese domain of MOCS3. Widely expressed. Highest levels are found in heart and skeletal muscle. Lower levels are present in brain, kidney and pancreas. Very low levels are found in lung and peripheral blood leukocytes.

The protein localises to the cytoplasm. Its subcellular location is the cytosol. Its pathway is cofactor biosynthesis; molybdopterin biosynthesis. Functionally, acts as a sulfur carrier required for molybdopterin biosynthesis. Component of the molybdopterin synthase complex that catalyzes the conversion of precursor Z into molybdopterin by mediating the incorporation of 2 sulfur atoms into precursor Z to generate a dithiolene group. In the complex, serves as sulfur donor by being thiocarboxylated (-COSH) at its C-terminus by MOCS3. After interaction with MOCS2B, the sulfur is then transferred to precursor Z to form molybdopterin. The chain is Molybdopterin synthase sulfur carrier subunit from Homo sapiens (Human).